We begin with the raw amino-acid sequence, 27 residues long: Superoxide dismutase [Mn] (27 aa).

This sequence belongs to the iron/manganese superoxide dismutase family. As to quaternary structure, homodimer. Requires Mn(2+) as cofactor.

The catalysed reaction is 2 superoxide + 2 H(+) = H2O2 + O2. Its function is as follows. Destroys superoxide anion radicals which are normally produced within the cells and which are toxic to biological systems. This is Superoxide dismutase [Mn] (sodA) from Desulfovibrio desulfuricans.